Reading from the N-terminus, the 1587-residue chain is NHS-like protein 1 (1587 aa).

The residue at position 24 (serine 24) is a Phosphoserine. Disordered regions lie at residues 140 to 163 (FAAG…KCSL) and 176 to 202 (RPKT…PLPT). Positions 179–196 (TPTSGDFSDLHTQTNWTK) are enriched in polar residues. 2 positions are modified to phosphoserine: serine 197 and serine 328. Polar residues predominate over residues 431-446 (SAGQLDSRTPGSSSYS). 2 disordered regions span residues 431 to 470 (SAGQ…PRHH) and 549 to 584 (SEPW…VSSC). Positions 449–470 (KPRDRPTPRCSVKDDHQSPRHH) are enriched in basic and acidic residues. Serine 563 is subject to Phosphoserine. Positions 573–584 (GCSTPTSNVSSC) are enriched in polar residues. Phosphoserine is present on serine 629. 3 disordered regions span residues 661–687 (KAKK…QTNG), 705–767 (SLPG…SSVK), and 789–1059 (NPTG…RPPM). Over residues 705 to 720 (SLPGKGGSSPSQSPCS) the composition is skewed to low complexity. Polar residues-rich tracts occupy residues 730 to 750 (SRSQ…TPNV), 757 to 767 (TPSQSDTSSVK), 792 to 801 (GGCSANTEAA), and 838 to 855 (RVTS…TPTA). A compositionally biased stretch (low complexity) spans 885–911 (SLISSMSISSSSTSLSSNTSTEGSGTM). Composition is skewed to pro residues over residues 923 to 934 (APPPPPLPPLPS), 958 to 972 (PLPP…PPEA), and 998 to 1021 (SLPP…PPLD). Positions 1040–1055 (SSREALRRPANKEEGC) are enriched in basic and acidic residues. The residue at position 1079 (serine 1079) is a Phosphoserine. 2 disordered regions span residues 1083–1534 (AVLF…ARRA) and 1565–1587 (VDGI…EQKS). Composition is skewed to polar residues over residues 1089–1099 (PSAQEQRTPTA) and 1112–1141 (SRNS…SQSQ). Serine 1157 and serine 1218 each carry phosphoserine. Positions 1222-1234 (AEGEAVRSQEEKS) are enriched in basic and acidic residues. Over residues 1275-1285 (QPNTSPGPTQE) the composition is skewed to polar residues. Positions 1360–1370 (GRKDSEDDHTR) are enriched in basic and acidic residues. Phosphoserine is present on residues serine 1373 and serine 1375. Residue threonine 1379 is modified to Phosphothreonine. Residues 1392–1409 (QVGSIQRSIKKSTTSSDN) are compositionally biased toward polar residues. Residues 1434 to 1447 (KSTDPRFQRSRSEP) show a composition bias toward basic and acidic residues. Composition is skewed to low complexity over residues 1448-1460 (SADS…SCSP) and 1484-1503 (SGPR…SRYS). Polar residues predominate over residues 1576–1587 (PSEQCGGTEQKS).

This sequence belongs to the NHS family.

This is NHS-like protein 1 (Nhsl1) from Mus musculus (Mouse).